The primary structure comprises 106 residues: PTS system N,N'-diacetylchitobiose-specific EIIB component (106 aa).

Residues 3–106 (KKHIYLFCSA…VAAIKKAAAN (104 aa)) enclose the PTS EIIB type-3 domain. The active-site Phosphocysteine intermediate is Cys-10. Position 10 is a phosphocysteine; by EIIA (Cys-10).

Forms a complex with ChbA (EIIA). ChbB is a monomer in both its unphosphorylated and phosphorylated forms.

It localises to the cytoplasm. The enzyme catalyses N,N'-diacetylchitobiose(out) + N(pros)-phospho-L-histidyl-[protein] = diacetylchitobiose-6'-phosphate(in) + L-histidyl-[protein]. In terms of biological role, the phosphoenolpyruvate-dependent sugar phosphotransferase system (sugar PTS), a major carbohydrate active transport system, catalyzes the phosphorylation of incoming sugar substrates concomitantly with their translocation across the cell membrane. The enzyme II ChbABC PTS system is involved in the transport of the chitin disaccharide N,N'-diacetylchitobiose (GlcNAc2). The protein is PTS system N,N'-diacetylchitobiose-specific EIIB component (chbB) of Escherichia coli O157:H7.